The following is a 116-amino-acid chain: Large ribosomal subunit protein bL17 (116 aa).

This sequence belongs to the bacterial ribosomal protein bL17 family. In terms of assembly, part of the 50S ribosomal subunit. Contacts protein L32.

The polypeptide is Large ribosomal subunit protein bL17 (Thermosynechococcus vestitus (strain NIES-2133 / IAM M-273 / BP-1)).